Here is a 403-residue protein sequence, read N- to C-terminus: Bifunctional enzyme IspD/IspF (403 aa).

The 2-C-methyl-D-erythritol 4-phosphate cytidylyltransferase stretch occupies residues 1–234 (MPTSKRTAAI…ARLAAMLGDI (234 aa)). Residues 235-403 (RTGTGYDVHA…SDQEDKGWST (169 aa)) are 2-C-methyl-D-erythritol 2,4-cyclodiphosphate synthase. A divalent metal cation is bound by residues D241 and H243. 4-CDP-2-C-methyl-D-erythritol 2-phosphate contacts are provided by residues 241 to 243 (DVH) and 267 to 268 (HS). A divalent metal cation is bound at residue H275. Residues 289–291 (DIG), 365–368 (TTSE), F372, and R375 contribute to the 4-CDP-2-C-methyl-D-erythritol 2-phosphate site.

In the N-terminal section; belongs to the IspD/TarI cytidylyltransferase family. IspD subfamily. The protein in the C-terminal section; belongs to the IspF family. A divalent metal cation serves as cofactor.

It catalyses the reaction 2-C-methyl-D-erythritol 4-phosphate + CTP + H(+) = 4-CDP-2-C-methyl-D-erythritol + diphosphate. The enzyme catalyses 4-CDP-2-C-methyl-D-erythritol 2-phosphate = 2-C-methyl-D-erythritol 2,4-cyclic diphosphate + CMP. Its pathway is isoprenoid biosynthesis; isopentenyl diphosphate biosynthesis via DXP pathway; isopentenyl diphosphate from 1-deoxy-D-xylulose 5-phosphate: step 2/6. It functions in the pathway isoprenoid biosynthesis; isopentenyl diphosphate biosynthesis via DXP pathway; isopentenyl diphosphate from 1-deoxy-D-xylulose 5-phosphate: step 4/6. Its function is as follows. Bifunctional enzyme that catalyzes the formation of 4-diphosphocytidyl-2-C-methyl-D-erythritol from CTP and 2-C-methyl-D-erythritol 4-phosphate (MEP) (IspD), and catalyzes the conversion of 4-diphosphocytidyl-2-C-methyl-D-erythritol 2-phosphate (CDP-ME2P) to 2-C-methyl-D-erythritol 2,4-cyclodiphosphate (ME-CPP) with a corresponding release of cytidine 5-monophosphate (CMP) (IspF). In Nitrobacter hamburgensis (strain DSM 10229 / NCIMB 13809 / X14), this protein is Bifunctional enzyme IspD/IspF.